A 913-amino-acid chain; its full sequence is Calcium-activated chloride channel regulator 1 (913 aa).

Residues M1–S21 form the signal peptide. A metalloprotease domain region spans residues D46–H199. H156 is a Zn(2+) binding site. E157 is a catalytic residue. Zn(2+)-binding residues include H160 and N167. Residues I306–L475 enclose the VWFA domain. N503, N514, N770, N804, N810, N836, and N885 each carry an N-linked (GlcNAc...) asparagine glycan.

The protein belongs to the CLCR family. In terms of processing, glycosylated. Post-translationally, the translation product is autoproteolytically cleaved by the metalloprotease domain in the endoplasmic reticulum into a N-terminal and a C-terminal products that remain physically associated with each other. The cleavage is necessary for calcium-activated chloride channel (CaCC) activation activity. Expressed in mucin-producing cells in the respiratory and intestinal tracts, cutaneous sweat glands, and renal mucous glands (at protein level). Strong overexpression in the airways of horses with recurrent airway obstruction (at protein level).

The protein localises to the secreted. It is found in the extracellular space. Functionally, may be involved in mediating calcium-activated chloride conductance. May play critical roles in goblet cell metaplasia, mucus hypersecretion, cystic fibrosis and AHR. May be involved in the regulation of mucus production and/or secretion by goblet cells. Involved in the regulation of tissue inflammation in the innate immune response. May play a role as a tumor suppressor. Induces MUC5AC. This chain is Calcium-activated chloride channel regulator 1 (CLCA1), found in Equus caballus (Horse).